Consider the following 226-residue polypeptide: Phosphoribosylformylglycinamidine synthase subunit PurQ (226 aa).

One can recognise a Glutamine amidotransferase type-1 domain in the interval R2–N225. Residue C86 is the Nucleophile of the active site. Active-site residues include H194 and E196.

In terms of assembly, part of the FGAM synthase complex composed of 1 PurL, 1 PurQ and 2 PurS subunits.

It localises to the cytoplasm. The catalysed reaction is N(2)-formyl-N(1)-(5-phospho-beta-D-ribosyl)glycinamide + L-glutamine + ATP + H2O = 2-formamido-N(1)-(5-O-phospho-beta-D-ribosyl)acetamidine + L-glutamate + ADP + phosphate + H(+). It catalyses the reaction L-glutamine + H2O = L-glutamate + NH4(+). It functions in the pathway purine metabolism; IMP biosynthesis via de novo pathway; 5-amino-1-(5-phospho-D-ribosyl)imidazole from N(2)-formyl-N(1)-(5-phospho-D-ribosyl)glycinamide: step 1/2. Part of the phosphoribosylformylglycinamidine synthase complex involved in the purines biosynthetic pathway. Catalyzes the ATP-dependent conversion of formylglycinamide ribonucleotide (FGAR) and glutamine to yield formylglycinamidine ribonucleotide (FGAM) and glutamate. The FGAM synthase complex is composed of three subunits. PurQ produces an ammonia molecule by converting glutamine to glutamate. PurL transfers the ammonia molecule to FGAR to form FGAM in an ATP-dependent manner. PurS interacts with PurQ and PurL and is thought to assist in the transfer of the ammonia molecule from PurQ to PurL. In Alkaliphilus metalliredigens (strain QYMF), this protein is Phosphoribosylformylglycinamidine synthase subunit PurQ.